A 268-amino-acid chain; its full sequence is Ribonuclease P protein subunit p30 (268 aa).

Position 2 is an N-acetylalanine (A2). A Phosphoserine modification is found at S251.

The protein belongs to the eukaryotic/archaeal RNase P protein component 3 family. As to quaternary structure, component of nuclear RNase P and RNase MRP ribonucleoproteins. RNase P consists of a catalytic RNA moiety and about 10 protein subunits; POP1, POP4, POP5, POP7, RPP14, RPP21, RPP25, RPP30, RPP38 and RPP40. Within the RNase P complex, POP1, POP7 and RPP25 form the 'finger' subcomplex, POP5, RPP14, RPP40 and homodimeric RPP30 form the 'palm' subcomplex, and RPP21, POP4 and RPP38 form the 'wrist' subcomplex. All subunits of the RNase P complex interact with the catalytic RNA. Several subunits of RNase P are also part of the RNase MRP complex. RNase MRP consists of a catalytic RNA moiety and about 8 protein subunits; POP1, POP7, RPP25, RPP30, RPP38, RPP40 and possibly also POP4 and POP5.

It is found in the nucleus. The protein localises to the nucleolus. In terms of biological role, component of ribonuclease P, a ribonucleoprotein complex that generates mature tRNA molecules by cleaving their 5'-ends. Also a component of the MRP ribonuclease complex, which cleaves pre-rRNA sequences. This is Ribonuclease P protein subunit p30 (Rpp30) from Mus musculus (Mouse).